A 461-amino-acid chain; its full sequence is Complement C1r subcomponent-like protein (461 aa).

Positions 1–22 (MCWLLLWGILHTCPTQASVLLA) are cleaved as a signal peptide. Residues 23 to 139 (QQFPQQLTSP…KGFLALYQAA (117 aa)) form the CUB domain. Intrachain disulfides connect C71–C89 and C164–C197. Residues 138–199 (AAVSQPNGDA…RGEEVPECVP (62 aa)) form the Sushi domain. The Peptidase S1 domain maps to 214–453 (TFGSSRAKPG…YVDWIKGVIE (240 aa)). Residue H252 is the Charge relay system of the active site. An N-linked (GlcNAc...) asparagine glycan is attached at N265. Residue D308 is the Charge relay system of the active site. N332 is a glycosylation site (N-linked (GlcNAc...) asparagine). 2 disulfides stabilise this stretch: C371/C390 and C401/C431. S405 (charge relay system) is an active-site residue.

This sequence belongs to the peptidase S1 family.

It localises to the secreted. In terms of biological role, mediates the proteolytic cleavage of HP/haptoglobin in the endoplasmic reticulum. The chain is Complement C1r subcomponent-like protein (C1rl) from Rattus norvegicus (Rat).